Reading from the N-terminus, the 203-residue chain is Putative 3-methyladenine DNA glycosylase (203 aa).

This sequence belongs to the DNA glycosylase MPG family.

The protein is Putative 3-methyladenine DNA glycosylase of Clostridium botulinum (strain Langeland / NCTC 10281 / Type F).